The chain runs to 685 residues: Keratin, type II cytoskeletal 2 epidermal (685 aa).

A disordered region spans residues Met1–Gly20. Positions Met1–Gln196 are head. An Asymmetric dimethylarginine modification is found at Arg22. Phosphoserine occurs at positions 25 and 28. Position 52 is an omega-N-methylarginine (Arg52). Ser64 carries the phosphoserine modification. A coil 1A region spans residues Glu197–Leu232. The 315-residue stretch at Glu197–Met511 folds into the IF rod domain. The linker 1 stretch occupies residues Gln233–Tyr251. The interval Ile252 to Leu343 is coil 1B. Residues Gln344–Ile367 are linker 12. The tract at residues Ile368 to Glu507 is coil 2. The interval Glu508–Arg685 is tail. Positions Val532–Arg685 are disordered. Positions Phe538–Ser678 are enriched in gly residues. Arg554, Arg588, Arg603, and Arg653 each carry omega-N-methylarginine.

It belongs to the intermediate filament family. Heterotetramer of two type I and two type II keratins. Associates with KRT10.

It is found in the cytoplasm. Probably contributes to terminal cornification. Associated with keratinocyte activation, proliferation and keratinization. Required for maintenance of corneocytes and keratin filaments in suprabasal keratinocytes in the epidermis of the ear, potentially via moderation of expression and localization of keratins and their partner proteins. Plays a role in the establishment of the epidermal barrier on plantar skin. This is Keratin, type II cytoskeletal 2 epidermal from Rattus norvegicus (Rat).